A 331-amino-acid polypeptide reads, in one-letter code: Protein PER1 homolog (331 aa).

Residues methionine 1–alanine 24 form the signal peptide. Over serine 25–arginine 100 the chain is Lumenal. A helical transmembrane segment spans residues valine 101–tyrosine 121. Over asparagine 122–arginine 139 the chain is Cytoplasmic. Residues leucine 140–isoleucine 160 form a helical membrane-spanning segment. At arginine 161–lysine 168 the chain is on the lumenal side. Residues leucine 169–methionine 189 traverse the membrane as a helical segment. Over leucine 190–lysine 199 the chain is Cytoplasmic. Residues leucine 200–leucine 220 form a helical membrane-spanning segment. The Lumenal portion of the chain corresponds to serine 221–lysine 232. A helical transmembrane segment spans residues alanine 233–tryptophan 250. Over serine 251–proline 263 the chain is Cytoplasmic. Residues alanine 264–isoleucine 284 form a helical membrane-spanning segment. The Lumenal portion of the chain corresponds to alanine 285 to aspartate 289. A helical membrane pass occupies residues alanine 290–valine 310. Residues arginine 311–arginine 331 lie on the Cytoplasmic side of the membrane.

Belongs to the PGAP3/PER1 family.

It is found in the endoplasmic reticulum membrane. The protein resides in the vacuole membrane. Functionally, involved in the lipid remodeling steps of GPI-anchor maturation. Lipid remodeling steps consist in the generation of 2 saturated fatty chains at the sn-2 position of GPI-anchors proteins. Required for phospholipase A2 activity that removes an acyl-chain at the sn-2 position of GPI-anchors during the remodeling of GPI. Required for efficient transport of GPI-anchor proteins. The protein is Protein PER1 homolog of Schizosaccharomyces pombe (strain 972 / ATCC 24843) (Fission yeast).